We begin with the raw amino-acid sequence, 913 residues long: Protein translocase subunit SecA (913 aa).

ATP-binding positions include Q87, G105 to T109, and D512. Zn(2+)-binding residues include C897, C899, C908, and H909.

It belongs to the SecA family. As to quaternary structure, monomer and homodimer. Part of the essential Sec protein translocation apparatus which comprises SecA, SecYEG and auxiliary proteins SecDF-YajC and YidC. Zn(2+) serves as cofactor.

The protein localises to the cell inner membrane. The protein resides in the cytoplasm. It catalyses the reaction ATP + H2O + cellular proteinSide 1 = ADP + phosphate + cellular proteinSide 2.. Its function is as follows. Part of the Sec protein translocase complex. Interacts with the SecYEG preprotein conducting channel. Has a central role in coupling the hydrolysis of ATP to the transfer of proteins into and across the cell membrane, serving both as a receptor for the preprotein-SecB complex and as an ATP-driven molecular motor driving the stepwise translocation of polypeptide chains across the membrane. In Pseudomonas savastanoi pv. phaseolicola (strain 1448A / Race 6) (Pseudomonas syringae pv. phaseolicola (strain 1448A / Race 6)), this protein is Protein translocase subunit SecA.